A 371-amino-acid chain; its full sequence is Neuropeptide S receptor (371 aa).

Residues 1–21 (MPANFTEGSFDSSGTGQTLDS) show a composition bias toward polar residues. A disordered region spans residues 1–22 (MPANFTEGSFDSSGTGQTLDSS). At 1–52 (MPANFTEGSFDSSGTGQTLDSSPVACTETVTFTEVVEGKEWGSFYYSFKTEQ) the chain is on the extracellular side. Asn4 carries an N-linked (GlcNAc...) asparagine glycan. The helical transmembrane segment at 53–73 (LITLWVLFVFTIVGNSVVLFS) threads the bilayer. At 74-82 (TWRRKKKSR) the chain is on the cytoplasmic side. The helical transmembrane segment at 83–103 (MTFFVTQLAITDSFTGLVNIL) threads the bilayer. Residues 104-123 (TDINWRFTGDFTAPDLVCRV) are Extracellular-facing. Cysteines 121 and 197 form a disulfide. Residues 124–144 (VRYLQVVLLYASTYVLVSLSI) traverse the membrane as a helical segment. Over 145–164 (DRYHAIVYPMKFLQGEKQAR) the chain is Cytoplasmic. The helical transmembrane segment at 165-185 (VLIVIAWSLSFLFSIPTLIIF) threads the bilayer. Topologically, residues 186–212 (GKRTLSNGEVQCWALWPDDSYWTPYMT) are extracellular. The helical transmembrane segment at 213-233 (IVAFLVYFIPLTIISIMYGIV) threads the bilayer. Topologically, residues 234-275 (IRTIWIKSKTYETVISNCSDGKLCSSYNRGLISKAKIKAIKY) are cytoplasmic. The helical transmembrane segment at 276–296 (SIIIILAFICCWSPYFLFDIL) threads the bilayer. The Extracellular portion of the chain corresponds to 297-312 (DNFNLLPDTQERFYAS). The chain crosses the membrane as a helical span at residues 313–333 (VIIQNLPALNSAINPLIYCVF). Topologically, residues 334–371 (SSSISFPCREQRSQDSRMTFRERTERHEMQILSKPEFI) are cytoplasmic.

Belongs to the G-protein coupled receptor 1 family. Vasopressin/oxytocin receptor subfamily. Isoform 4 is ubiquitous; it is detected in glandular epithelia of bronchus, stomach, small intestine, colon, uterus, esophagus, spleen, kidney, pancreas, prostate and breast. Isoform 1 is detected in uterus, colon and prostate, and in the smooth muscle cell layer in bronchial and arterial walls (at protein level). Isoform 1 is predominantly expressed in smooth muscle. Isoform 4 is predominantly expressed in epithelial cells. In bronchial biopsies, it is expressed in smooth muscle cells of asthma patients, but not in control patients; whereas in epithelial cells, its expression is consistently stronger in asthma patients.

It is found in the cell membrane. The protein resides in the cytoplasm. G-protein coupled receptor for neuropeptide S (NPS). Promotes mobilization of intracellular Ca(2+) stores. Inhibits cell growth in response to NPS binding. Involved in pathogenesis of asthma and other IgE-mediated diseases. The chain is Neuropeptide S receptor (NPSR1) from Homo sapiens (Human).